The following is a 418-amino-acid chain: Argininosuccinate synthase (418 aa).

16 to 24 (AYSGGLDTS) lines the ATP pocket. Tyr95 provides a ligand contact to L-citrulline. Position 125 (Gly125) interacts with ATP. L-aspartate-binding residues include Thr127, Asn131, and Asp132. Asn131 lines the L-citrulline pocket. Arg135, Ser183, Glu267, and Tyr279 together coordinate L-citrulline.

Belongs to the argininosuccinate synthase family. Type 1 subfamily. Homotetramer.

It localises to the cytoplasm. It catalyses the reaction L-citrulline + L-aspartate + ATP = 2-(N(omega)-L-arginino)succinate + AMP + diphosphate + H(+). It participates in amino-acid biosynthesis; L-arginine biosynthesis; L-arginine from L-ornithine and carbamoyl phosphate: step 2/3. This chain is Argininosuccinate synthase, found in Bifidobacterium adolescentis (strain ATCC 15703 / DSM 20083 / NCTC 11814 / E194a).